The following is a 103-amino-acid chain: Glycoprotein 24B (103 aa).

Belongs to the csb family. Post-translationally, O-glycosylated.

The protein resides in the cell surface. In terms of biological role, cell-cell adhesion during early development. This chain is Glycoprotein 24B (csbB), found in Dictyostelium discoideum (Social amoeba).